A 940-amino-acid chain; its full sequence is Antiviral innate immune response receptor RIG-I (940 aa).

CARD domains follow at residues 1-87 (MTAE…GLCE) and 92-172 (WDFQ…KTLK). Glycyl lysine isopeptide (Lys-Gly) (interchain with G-Cter in ubiquitin) cross-links involve residues lysine 48, lysine 96, lysine 154, lysine 164, lysine 172, and lysine 190. The interval 219-928 (ENQNLSQNSC…LSFDAAEMAG (710 aa)) is interaction with ZC3HAV1. In terms of domain architecture, Helicase ATP-binding spans 249-428 (ALPAQNGKNT…AEATEYICKL (180 aa)). 262-269 (APTGCGKT) contacts ATP. Residues 370-373 (DECH) carry the DECH box motif. The Helicase C-terminal domain occupies 613–779 (KLRDLCFILQ…ILQTWDEAVF (167 aa)). Residues 738–928 (GSKCFLLTAN…LSFDAAEMAG (191 aa)) are mediates interaction with RNF135. Threonine 773 carries the post-translational modification Phosphothreonine; by CK2. An RLR CTR domain is found at 795–928 (DNQGKPEPVP…LSFDAAEMAG (134 aa)). Position 813 (cysteine 813) interacts with Zn(2+). A Glycyl lysine isopeptide (Lys-Gly) (interchain with G-Cter in ubiquitin) cross-link involves residue lysine 815. Cysteine 816 contributes to the Zn(2+) binding site. Lysine 861 carries the N6-acetyllysine modification. Zn(2+) contacts are provided by cysteine 867 and cysteine 872. Lysine 912 bears the N6-acetyllysine mark.

Belongs to the helicase family. RLR subfamily. In terms of assembly, monomer; maintained as a monomer in an autoinhibited state. Upon binding of viral RNAs and conformational shift, homooligomerizes and forms filaments on these molecules. Interacts (via tandem CARD domain) with MAVS/IPS1 promoting its filamentation. Interacts with DHX58/LGP2, IKBKE, TBK1 and STING1. Interacts (via CARD domain) with TRIM25 (via SPRY domain). Interacts (double-stranded RNA-bound oligomeric form) with RNF135 (homodimer); involved in RNA length-dependent activation of the RIG-I signaling pathway. Interacts with CYLD. Interacts with NLRC5; blocks the interaction of MAVS/IPS1 to RIGI. Interacts with SRC. Interacts with DDX60. Interacts with ZC3HAV1 (via zinc-fingers) in an RNA-dependent manner. Interacts (via tandem CARD domain) with SEC14L1; the interaction is direct and impairs the interaction of RIGI with MAVS/IPS1. Interacts with VCP/p97; interaction is direct and allows the recruitment of RNF125 and subsequent ubiquitination and degradation. Interacts with NOP53; may regulate RIGI through USP15-mediated 'Lys-63'-linked deubiquitination. Interacts with SIGLEC10, CBL and PTPN11; within a negative feedback loop leading to RIGI degradation. Interacts with LRRC25. Interacts with ZCCHC3; leading to activation of RIGI. Interacts with RNF123. Interacts with UBE2D3 and UBE2N; E2 ubiquitin ligases involved in RNF135-mediated ubiquitination of RIGI and activation of the RIG-I signaling pathway. Interacts with IFIT3. Interacts with DDX3X. Interacts with RTN3. Interacts with ARL16; this interaction is GTP-dependent and induced upon viral infection; this interaction suppresses the RNA sensing activity of RIGI. Interacts with DHX16; this interaction enhances RIGI-mediated antiviral response. Interacts with IRGM; promoting RIGI degradation. Interacts with IFI6; this interaction inhibits RIGI activation. Interacts with ECSIT; this interaction bridges RIGI to the MAVS complex at the mitochondrion. Interacts with YWHAE; this interaction drives RIGI at the mitochondrion. Phosphorylated in resting cells and dephosphorylated in RNA virus-infected cells. Phosphorylation at Thr-773 results in inhibition of its activity while dephosphorylation at these sites results in its activation. In terms of processing, ISGylated. Conjugated to ubiquitin-like protein ISG15 upon IFN-beta stimulation. ISGylation negatively regulates its function in antiviral signaling response. Post-translationally, sumoylated, probably by MUL1; inhibiting its polyubiquitination. Acetylated in response to RNA virus infection. Deacetylated by HDAC6 in the presence of viral mRNAs which is required for detection of viral RNA by RIGI. In terms of processing, ubiquitinated. 'Lys-63' ubiquitination by RNF135, which occurs after RNA-binding and homodimerization, releases the autoinhibition of the CARD domains by the RLR CTR domain, an essential step in the activation of the RIG-I signaling pathway. Also ubiquitinated by TRIM4. Also undergoes 'Lys-48' ubiquitination by RNF125 that leads to proteasomal degradation. 'Lys-48' ubiquitination follows viral infection and is enhanced by 'Lys-63'-linked ubiquitination of the CARD domains that promotes interaction with VCP/p97 and subsequent recruitment of RNF125. Within a negative feedback loop involving SIGLEC10 and PTPN11, 'Lys-48' ubiquitination at Lys-815 by CBL also elicits the proteasomal degradation of RIGI. Deubiquitinated by CYLD, a protease that selectively cleaves 'Lys-63'-linked ubiquitin chains. Also probably deubiquitinated by USP17L2/USP17 that cleaves 'Lys-48'- and 'Lys-63'-linked ubiquitin chains and positively regulates the receptor. Ubiquitinated by TRIM40 via 'Lys-48'-linked ubiquitination; leading to proteasomal degradation. Deubiquitinated by USP27X that cleaves 'Lys-63'-linked ubiquitin chains and inhibits the innate immune receptor activity. Deubiquitinated by USP3 that also cleaves 'Lys-63'-linked ubiquitin chains and inhibits the innate immune receptor activity. Post-translationally, degraded via selective autophagy following interaction with IRGM. IRGM promotes RIGI recruitment to autophagosome membranes, promoting its SQSTM1/p62-dependent autophagic degradation. As to expression, ubiquitously expressed, with highest levels in spleen, liver, intestine and heart. Up-regulated in tracheobronchial lymph node and tonsils during porcine reproductive and respiratory syndrome virus (PRRSV) infection.

Its subcellular location is the cytoplasm. The protein resides in the cell projection. The protein localises to the ruffle membrane. It is found in the cytoskeleton. It localises to the cell junction. Its subcellular location is the tight junction. The catalysed reaction is ATP + H2O = ADP + phosphate + H(+). Its function is as follows. Innate immune receptor that senses cytoplasmic viral nucleic acids and activates a downstream signaling cascade leading to the production of type I interferons and pro-inflammatory cytokines. Forms a ribonucleoprotein complex with viral RNAs on which it homooligomerizes to form filaments. The homooligomerization allows the recruitment of RNF135 an E3 ubiquitin-protein ligase that activates and amplifies the RIG-I-mediated antiviral signaling in an RNA length-dependent manner through ubiquitination-dependent and -independent mechanisms. Upon activation, associates with mitochondria antiviral signaling protein (MAVS/IPS1) that activates the IKK-related kinases TBK1 and IKBKE which in turn phosphorylate the interferon regulatory factors IRF3 and IRF7, activating transcription of antiviral immunological genes including the IFN-alpha and IFN-beta interferons. Ligands include: 5'-triphosphorylated ssRNA and dsRNA and short dsRNA (&lt;1 kb in length). In addition to the 5'-triphosphate moiety, blunt-end base pairing at the 5'-end of the RNA is very essential. Overhangs at the non-triphosphorylated end of the dsRNA RNA have no major impact on its activity. A 3'overhang at the 5'triphosphate end decreases and any 5'overhang at the 5' triphosphate end abolishes its activity. Detects both positive and negative strand RNA viruses including members of the families Paramyxoviridae, Rhabdoviridae: vesicular stomatitis virus (VSV) Orthomyxoviridae: influenza A and B virus, Flaviviridae: Japanese encephalitis virus (JEV). It also detects rotavirus and reovirus. Also involved in antiviral signaling in response to viruses containing a dsDNA genome. Detects dsRNA produced from non-self dsDNA by RNA polymerase III. May play important roles in granulocyte production and differentiation, bacterial phagocytosis and in the regulation of cell migration. This is Antiviral innate immune response receptor RIG-I from Sus scrofa (Pig).